The primary structure comprises 200 residues: Nucleoside triphosphate pyrophosphatase (200 aa).

Asp79 functions as the Proton acceptor in the catalytic mechanism.

This sequence belongs to the Maf family. A divalent metal cation serves as cofactor.

The protein resides in the cytoplasm. It carries out the reaction a ribonucleoside 5'-triphosphate + H2O = a ribonucleoside 5'-phosphate + diphosphate + H(+). The catalysed reaction is a 2'-deoxyribonucleoside 5'-triphosphate + H2O = a 2'-deoxyribonucleoside 5'-phosphate + diphosphate + H(+). Nucleoside triphosphate pyrophosphatase. May have a dual role in cell division arrest and in preventing the incorporation of modified nucleotides into cellular nucleic acids. This Legionella pneumophila subsp. pneumophila (strain Philadelphia 1 / ATCC 33152 / DSM 7513) protein is Nucleoside triphosphate pyrophosphatase.